Here is a 576-residue protein sequence, read N- to C-terminus: Glutamine--tRNA ligase (576 aa).

The 'HIGH' region signature appears at 47–57 (PEPNGYLHIGH). Residues 48 to 50 (EPN) and 54 to 60 (HIGHAKS) each bind ATP. Residues aspartate 80 and tyrosine 229 each contribute to the L-glutamine site. ATP is bound by residues threonine 248 and 283-284 (RL). The 'KMSKS' region motif lies at 290-294 (ITSKR).

The protein belongs to the class-I aminoacyl-tRNA synthetase family. In terms of assembly, monomer.

The protein resides in the cytoplasm. The catalysed reaction is tRNA(Gln) + L-glutamine + ATP = L-glutaminyl-tRNA(Gln) + AMP + diphosphate. The chain is Glutamine--tRNA ligase from Ralstonia pickettii (strain 12J).